A 32-amino-acid chain; its full sequence is Seminal plasma protein PDC-109 (32 aa).

The disordered stretch occupies residues 1 to 32 (DQDEGVSTEPTQVGPAELHNDETCVGPLVYRN). The O-linked (GalNAc...) threonine glycan is linked to Thr11. The region spanning 19–32 (HNDETCVGPLVYRN) is the Fibronectin type-II domain.

This sequence belongs to the seminal plasma protein family. Homodimer.

The protein resides in the secreted. In terms of biological role, could enhance the fertilizing capacity of bull spermatozoa upon interaction with heparin-like glycosaminoglycans present in the female genital tract. Exhibits both simulatory and inhibitory actions on the release of pituitary gonadotropins. Binds to heparin and gelatin. This chain is Seminal plasma protein PDC-109, found in Bos indicus (Zebu).